The following is a 494-amino-acid chain: Probable cytosol aminopeptidase (494 aa).

Positions 260 and 265 each coordinate Mn(2+). Lysine 272 is an active-site residue. Mn(2+)-binding residues include aspartate 283, aspartate 342, and glutamate 344. Arginine 346 is a catalytic residue.

It belongs to the peptidase M17 family. It depends on Mn(2+) as a cofactor.

The protein localises to the cytoplasm. It carries out the reaction Release of an N-terminal amino acid, Xaa-|-Yaa-, in which Xaa is preferably Leu, but may be other amino acids including Pro although not Arg or Lys, and Yaa may be Pro. Amino acid amides and methyl esters are also readily hydrolyzed, but rates on arylamides are exceedingly low.. The catalysed reaction is Release of an N-terminal amino acid, preferentially leucine, but not glutamic or aspartic acids.. In terms of biological role, presumably involved in the processing and regular turnover of intracellular proteins. Catalyzes the removal of unsubstituted N-terminal amino acids from various peptides. The chain is Probable cytosol aminopeptidase from Bacillus cereus (strain Q1).